Consider the following 327-residue polypeptide: Probable cell division protein WhiA (327 aa).

Residues 275 to 308 (SLEELGRLADPPMTKDAVAGRIRRLLSMADRKAK) constitute a DNA-binding region (H-T-H motif). The tract at residues 304–327 (DRKAKQDGIPDTESAVTPDLLEDA) is disordered.

Belongs to the WhiA family.

In terms of biological role, involved in cell division and chromosome segregation. The protein is Probable cell division protein WhiA of Mycobacterium sp. (strain MCS).